A 438-amino-acid polypeptide reads, in one-letter code: 5-methylthioadenosine/S-adenosylhomocysteine deaminase (438 aa).

Zn(2+) contacts are provided by histidine 71 and histidine 73. Positions 100 and 192 each coordinate substrate. Residue histidine 219 participates in Zn(2+) binding. Residues glutamate 222 and aspartate 307 each contribute to the substrate site. A Zn(2+)-binding site is contributed by aspartate 307.

Belongs to the metallo-dependent hydrolases superfamily. MTA/SAH deaminase family. Requires Zn(2+) as cofactor.

The enzyme catalyses S-adenosyl-L-homocysteine + H2O + H(+) = S-inosyl-L-homocysteine + NH4(+). The catalysed reaction is S-methyl-5'-thioadenosine + H2O + H(+) = S-methyl-5'-thioinosine + NH4(+). Catalyzes the deamination of 5-methylthioadenosine and S-adenosyl-L-homocysteine into 5-methylthioinosine and S-inosyl-L-homocysteine, respectively. Is also able to deaminate adenosine. This chain is 5-methylthioadenosine/S-adenosylhomocysteine deaminase, found in Syntrophobacter fumaroxidans (strain DSM 10017 / MPOB).